We begin with the raw amino-acid sequence, 570 residues long: BRICHOS domain-containing protein C09F5.1 (570 aa).

At 1-288 (MVVEQIEVIE…YTPELLRSLC (288 aa)) the chain is on the cytoplasmic side. 2 stretches are compositionally biased toward polar residues: residues 93–107 (SGAT…SGDS) and 228–246 (TSTL…SLVS). 2 disordered regions span residues 93 to 116 (SGAT…GADR) and 218 to 248 (SSWD…VSRE). Residues 289 to 309 (CILLLLLLLLFLMFIIFNAIF) traverse the membrane as a helical segment. Residues 310–570 (NRYAVSEFLL…RKSINNATLV (261 aa)) are Extracellular-facing. The region spanning 369-461 (TAVDFNTGYV…IDDCEGAQWY (93 aa)) is the BRICHOS domain. Cysteines 395 and 455 form a disulfide.

It localises to the membrane. In Caenorhabditis elegans, this protein is BRICHOS domain-containing protein C09F5.1.